Here is a 416-residue protein sequence, read N- to C-terminus: tRNA(Met) cytidine acetate ligase (416 aa).

ATP contacts are provided by residues 7–20 (VAEY…HLYL), glycine 102, asparagine 166, and arginine 191.

Belongs to the TmcAL family.

The protein localises to the cytoplasm. The catalysed reaction is cytidine(34) in elongator tRNA(Met) + acetate + ATP = N(4)-acetylcytidine(34) in elongator tRNA(Met) + AMP + diphosphate. Catalyzes the formation of N(4)-acetylcytidine (ac(4)C) at the wobble position of elongator tRNA(Met), using acetate and ATP as substrates. First activates an acetate ion to form acetyladenylate (Ac-AMP) and then transfers the acetyl group to tRNA to form ac(4)C34. This is tRNA(Met) cytidine acetate ligase from Syntrophomonas wolfei subsp. wolfei (strain DSM 2245B / Goettingen).